The primary structure comprises 740 residues: DNA (cytosine-5)-methyltransferase 3C (740 aa).

Disordered stretches follow at residues 75–99 (LTGD…PVMP) and 248–312 (FKPT…DVTN). One can recognise an ADD domain in the interval 309 to 441 (DVTNNKGNLE…LQDFFTTDPD (133 aa)). The segment at 320-350 (HCLSCGRKDPVSFHPLFEGGLCQSCRDRFLE) adopts a GATA-type; atypical zinc-finger fold. The PHD-type; atypical zinc-finger motif lies at 361-417 (QSYCTVCCEGRELLLCSNTSCCRCFCVECLEVLVGAGTAEDVKLQEPWSCYMCLPQR). The region spanning 462-740 (IRVLSLFDGI…APLKDHFACE (279 aa)) is the SAM-dependent MTase C5-type domain. S-adenosyl-L-methionine-binding residues include isoleucine 471, threonine 473, glutamate 492, aspartate 514, and isoleucine 515. Cysteine 538 is an active-site residue. Positions 719 and 721 each coordinate S-adenosyl-L-methionine.

Belongs to the class I-like SAM-binding methyltransferase superfamily. C5-methyltransferase family. Homodimer. Interacts with DNMT3L. Interacts with SPOCD1; recruiting Dnmt3C to transposons. As to expression, specifically expressed in testis.

It is found in the nucleus. The enzyme catalyses a 2'-deoxycytidine in DNA + S-adenosyl-L-methionine = a 5-methyl-2'-deoxycytidine in DNA + S-adenosyl-L-homocysteine + H(+). In terms of biological role, DNA methyltransferase that specifically methylates the promoters of evolutionarily young retrotransposons in the male germline. De novo methylation and subsequent repression of transposable elements prevents their mobilization, which is essential for germline integrity. Compared to Dnmt3a and Dnmt3b, shows lower DNA methyltransferase efficiency. The protein is DNA (cytosine-5)-methyltransferase 3C of Mus musculus (Mouse).